We begin with the raw amino-acid sequence, 676 residues long: RNA helicase NPH-II (676 aa).

The 176-residue stretch at 172-347 (FSAWISHRPV…VFLPNPAFIH (176 aa)) folds into the Helicase ATP-binding domain. 185–192 (GGTGVGKT) is a binding site for ATP. Residues 296–299 (DEVH) carry the DEXH box motif. Positions 366-535 (NPSSRMAYIE…NYILYANKFN (170 aa)) constitute a Helicase C-terminal domain.

The protein belongs to the DEAD box helicase family. DEAH subfamily. Monomer.

The protein resides in the virion. The catalysed reaction is ATP + H2O = ADP + phosphate + H(+). Functionally, NTP-dependent helicase that catalyzes unidirectional unwinding of 3'tailed duplex RNAs and plays an important role during transcription of early mRNAs, presumably by preventing R-loop formation behind the elongating RNA polymerase. Might also play a role in the export of newly synthesized mRNA chains out of the core into the cytoplasm. Required for replication and propagation of viral particles. This is RNA helicase NPH-II (OPG084) from Vaccinia virus (strain Ankara) (VACV).